The following is a 95-amino-acid chain: Aspartyl/glutamyl-tRNA(Asn/Gln) amidotransferase subunit C (95 aa).

Belongs to the GatC family. In terms of assembly, heterotrimer of A, B and C subunits.

It carries out the reaction L-glutamyl-tRNA(Gln) + L-glutamine + ATP + H2O = L-glutaminyl-tRNA(Gln) + L-glutamate + ADP + phosphate + H(+). The catalysed reaction is L-aspartyl-tRNA(Asn) + L-glutamine + ATP + H2O = L-asparaginyl-tRNA(Asn) + L-glutamate + ADP + phosphate + 2 H(+). Allows the formation of correctly charged Asn-tRNA(Asn) or Gln-tRNA(Gln) through the transamidation of misacylated Asp-tRNA(Asn) or Glu-tRNA(Gln) in organisms which lack either or both of asparaginyl-tRNA or glutaminyl-tRNA synthetases. The reaction takes place in the presence of glutamine and ATP through an activated phospho-Asp-tRNA(Asn) or phospho-Glu-tRNA(Gln). The protein is Aspartyl/glutamyl-tRNA(Asn/Gln) amidotransferase subunit C of Rhizobium rhizogenes (strain K84 / ATCC BAA-868) (Agrobacterium radiobacter).